Reading from the N-terminus, the 655-residue chain is p-hydroxybenzoic acid efflux pump subunit AaeB (655 aa).

Topologically, residues 1-12 (MGIFSIANQHIR) are periplasmic. The helical transmembrane segment at 13–33 (FAVKLATAIVLALFVGFHFQL) threads the bilayer. Topologically, residues 34-37 (ETPR) are cytoplasmic. The chain crosses the membrane as a helical span at residues 38–58 (WAVLTAAIVAAGTAFAAGGEP). The Periplasmic portion of the chain corresponds to 59 to 68 (YSGAIRYRGF). Residues 69–89 (LRIIGTFIGCIAGLVIIIAMI) traverse the membrane as a helical segment. The Cytoplasmic portion of the chain corresponds to 90-92 (RAP). The chain crosses the membrane as a helical span at residues 93–113 (LLMILVCCIWAGFCTWISSLV). The Periplasmic portion of the chain corresponds to 114-120 (RIENSYA). A helical membrane pass occupies residues 121–141 (WGLAGYTALIIVITIQPEPLL). Over 142–151 (TPQFAVERCS) the chain is Cytoplasmic. Residues 152–172 (EIVIGIVCAIMADLLFSPRSI) traverse the membrane as a helical segment. Over 173–369 (KQEVDRELES…RTTLSCILGT (197 aa)) the chain is Periplasmic. Residues 370–390 (LFWLWTGWTSGSGAMVMIAVV) form a helical membrane-spanning segment. Residues 391-406 (TSLAMRLPNPRMVAID) are Cytoplasmic-facing. Residues 407-427 (FIYGTLAALPLGLLYFLVIIP) form a helical membrane-spanning segment. The Periplasmic segment spans residues 428-430 (NTQ). A helical transmembrane segment spans residues 431–451 (QSMLLLCISLAVLGFFLGIEV). Residues 452 to 458 (QKRRLGS) lie on the Cytoplasmic side of the membrane. Residues 459–479 (MGALASTINIIVLDNPMTFHF) form a helical membrane-spanning segment. Residues 480–481 (SQ) are Periplasmic-facing. A helical membrane pass occupies residues 482–502 (FLDSALGQIVGCVLAFTVILL). Topologically, residues 503–655 (VRDKSRDRTG…HKYQHALTDS (153 aa)) are cytoplasmic.

This sequence belongs to the aromatic acid exporter ArAE (TC 2.A.85) family.

It is found in the cell inner membrane. Forms an efflux pump with AaeA. Could function as a metabolic relief valve, allowing to eliminate certain compounds when they accumulate to high levels in the cell. Substrates are p-hydroxybenzoic acid (pHBA), 6-hydroxy-2-naphthoic and 2-hydroxycinnamate. The sequence is that of p-hydroxybenzoic acid efflux pump subunit AaeB from Escherichia coli (strain K12).